The following is a 1612-amino-acid chain: DNA topoisomerase 2-beta (1612 aa).

At Ala-2 the chain carries N-acetylalanine. Residue Lys-3 is modified to N6-acetyllysine. Residues Lys-21 and Lys-22 each participate in a glycyl lysine isopeptide (Lys-Gly) (interchain with G-Cter in SUMO2) cross-link. ATP is bound by residues Asn-100, Asn-129, and 157–159 (SSN). Glycyl lysine isopeptide (Lys-Gly) (interchain with G-Cter in SUMO2) cross-links involve residues Lys-165 and Lys-166. 170–177 (GRNGYGAK) is an ATP binding site. Residues Lys-216 and Lys-287 each participate in a glycyl lysine isopeptide (Lys-Gly) (interchain with G-Cter in SUMO2) cross-link. An interaction with DNA region spans residues 351 to 353 (KKK). Glycyl lysine isopeptide (Lys-Gly) (interchain with G-Cter in SUMO2) cross-links involve residues Lys-355 and Lys-361. ATP is bound at residue 385-387 (QTK). Residues Lys-425, Lys-427, and Lys-434 each participate in a glycyl lysine isopeptide (Lys-Gly) (interchain with G-Cter in SUMO2) cross-link. Residues 464 to 581 (CTLILTEGDS…SLLKHGFLEE (118 aa)) enclose the Toprim domain. Mg(2+) contacts are provided by Glu-470, Asp-550, and Asp-552. Residues Lys-588, Lys-593, Lys-623, Lys-631, Lys-634, Lys-664, and Lys-700 each participate in a glycyl lysine isopeptide (Lys-Gly) (interchain with G-Cter in SUMO2) cross-link. The Topo IIA-type catalytic domain maps to 724-1177 (IPSLVDGFKP…SPSDLWKEDL (454 aa)). Tyr-814 serves as the catalytic O-(5'-phospho-DNA)-tyrosine intermediate. The segment at 999-1008 (KLQTTLTCNS) is interaction with DNA. Lys-1080 is covalently cross-linked (Glycyl lysine isopeptide (Lys-Gly) (interchain with G-Cter in SUMO2)). The disordered stretch occupies residues 1098–1128 (AWKEAQEKAAEEEDTQNQHDDSSSDSGTPSG). Residues Lys-1202, Lys-1205, Lys-1214, and Lys-1215 each participate in a glycyl lysine isopeptide (Lys-Gly) (interchain with G-Cter in SUMO2) cross-link. Phosphoserine is present on Ser-1224. Residues Lys-1238, Lys-1250, and Lys-1259 each participate in a glycyl lysine isopeptide (Lys-Gly) (interchain with G-Cter in SUMO2) cross-link. The disordered stretch occupies residues 1245-1586 (LLKKKKGDPD…FTSEPPALPR (342 aa)). Thr-1280 bears the Phosphothreonine mark. Residues Lys-1311 and Lys-1315 each participate in a glycyl lysine isopeptide (Lys-Gly) (interchain with G-Cter in SUMO2) cross-link. 2 stretches are compositionally biased toward basic and acidic residues: residues 1322–1332 (PWSDDESKSES) and 1346–1358 (SLLR…RPKY). 5 positions are modified to phosphoserine: Ser-1324, Ser-1328, Ser-1330, Ser-1332, and Ser-1346. A Phosphotyrosine modification is found at Tyr-1358. The span at 1362–1379 (FSEEEEEDADDDDDNNDL) shows a compositional bias: acidic residues. A Phosphoserine modification is found at Ser-1363. Lys-1385 is covalently cross-linked (Glycyl lysine isopeptide (Lys-Gly) (interchain with G-Cter in SUMO2)). At Ser-1387 the chain carries Phosphoserine. Thr-1390 carries the post-translational modification Phosphothreonine. Ser-1400 is subject to Phosphoserine. Tyr-1408 is modified (phosphotyrosine). Ser-1411 carries the post-translational modification Phosphoserine. Over residues 1417–1429 (ATPEKSSHDKKSQ) the composition is skewed to basic and acidic residues. A Glycyl lysine isopeptide (Lys-Gly) (interchain with G-Cter in SUMO2) cross-link involves residue Lys-1427. Residues Ser-1428, Ser-1439, and Ser-1441 each carry the phosphoserine modification. Lys-1443 participates in a covalent cross-link: Glycyl lysine isopeptide (Lys-Gly) (interchain with G-Cter in SUMO2). Over residues 1443–1453 (KSEDDSAKFDS) the composition is skewed to basic and acidic residues. Ser-1448, Ser-1453, and Ser-1460 each carry phosphoserine. A Glycyl lysine isopeptide (Lys-Gly) (interchain with G-Cter in SUMO2) cross-link involves residue Lys-1477. The segment at 1493-1499 (KAKRAPK) is interaction with PLSCR1. 3 positions are modified to phosphoserine: Ser-1509, Ser-1511, and Ser-1513. The segment covering 1526 to 1536 (GKGRGAKKRKA) has biased composition (basic residues). Phosphoserine is present on residues Ser-1537 and Ser-1539. Positions 1550 to 1561 (KPSKTASKKPKK) are enriched in basic residues. Thr-1562 bears the Phosphothreonine mark. 2 positions are modified to phosphoserine: Ser-1563 and Ser-1568. Position 1596 is a phosphotyrosine (Tyr-1596). At Ser-1600 the chain carries Phosphoserine.

Belongs to the type II topoisomerase family. In terms of assembly, homodimer. Interacts with PLSCR1 and KIAA1210. Mg(2+) serves as cofactor. The cofactor is Mn(2+). It depends on Ca(2+) as a cofactor.

The protein resides in the nucleus. Its subcellular location is the nucleolus. It is found in the nucleoplasm. It catalyses the reaction ATP-dependent breakage, passage and rejoining of double-stranded DNA.. Its function is as follows. Key decatenating enzyme that alters DNA topology by binding to two double-stranded DNA molecules, generating a double-stranded break in one of the strands, passing the intact strand through the broken strand, and religating the broken strand. This is DNA topoisomerase 2-beta (TOP2B) from Cricetulus longicaudatus (Long-tailed dwarf hamster).